The primary structure comprises 407 residues: Imidazolonepropionase (407 aa).

Positions 68 and 70 each coordinate Fe(3+). Residues His-68 and His-70 each contribute to the Zn(2+) site. 4-imidazolone-5-propanoate contacts are provided by Arg-77, Tyr-140, and His-173. Tyr-140 contacts N-formimidoyl-L-glutamate. Position 236 (His-236) interacts with Fe(3+). Zn(2+) is bound at residue His-236. Gln-239 is a 4-imidazolone-5-propanoate binding site. Asp-311 is a Fe(3+) binding site. Position 311 (Asp-311) interacts with Zn(2+). The N-formimidoyl-L-glutamate site is built by Asn-313 and Gly-315. Residue Thr-316 coordinates 4-imidazolone-5-propanoate.

The protein belongs to the metallo-dependent hydrolases superfamily. HutI family. Requires Zn(2+) as cofactor. Fe(3+) serves as cofactor.

The protein resides in the cytoplasm. It catalyses the reaction 4-imidazolone-5-propanoate + H2O = N-formimidoyl-L-glutamate. It participates in amino-acid degradation; L-histidine degradation into L-glutamate; N-formimidoyl-L-glutamate from L-histidine: step 3/3. Its function is as follows. Catalyzes the hydrolytic cleavage of the carbon-nitrogen bond in imidazolone-5-propanoate to yield N-formimidoyl-L-glutamate. It is the third step in the universal histidine degradation pathway. This Stenotrophomonas maltophilia (strain R551-3) protein is Imidazolonepropionase.